The sequence spans 336 residues: Fructose-1,6-bisphosphatase class 1 (336 aa).

Residues E90, D112, L114, and D115 each contribute to the Mg(2+) site. Substrate is bound by residues 115 to 118, N211, and K277; that span reads DGSS. E283 contributes to the Mg(2+) binding site.

The protein belongs to the FBPase class 1 family. As to quaternary structure, homotetramer. It depends on Mg(2+) as a cofactor.

It localises to the cytoplasm. The enzyme catalyses beta-D-fructose 1,6-bisphosphate + H2O = beta-D-fructose 6-phosphate + phosphate. Its pathway is carbohydrate biosynthesis; gluconeogenesis. In Pseudomonas putida (strain ATCC 700007 / DSM 6899 / JCM 31910 / BCRC 17059 / LMG 24140 / F1), this protein is Fructose-1,6-bisphosphatase class 1.